Consider the following 31-residue polypeptide: Cytochrome b6-f complex subunit 6 (31 aa).

Residues isoleucine 4 to glycine 24 traverse the membrane as a helical segment.

It belongs to the PetL family. The 4 large subunits of the cytochrome b6-f complex are cytochrome b6, subunit IV (17 kDa polypeptide, PetD), cytochrome f and the Rieske protein, while the 4 small subunits are PetG, PetL, PetM and PetN. The complex functions as a dimer.

It is found in the plastid. The protein resides in the chloroplast thylakoid membrane. Its function is as follows. Component of the cytochrome b6-f complex, which mediates electron transfer between photosystem II (PSII) and photosystem I (PSI), cyclic electron flow around PSI, and state transitions. PetL is important for photoautotrophic growth as well as for electron transfer efficiency and stability of the cytochrome b6-f complex. This chain is Cytochrome b6-f complex subunit 6, found in Coffea arabica (Arabian coffee).